The chain runs to 27 residues: Cupiennin-3a (27 aa).

Glutamic acid 1-amide is present on Glu27.

Expressed by the venom gland.

It localises to the secreted. This is Cupiennin-3a from Cupiennius salei (American wandering spider).